The primary structure comprises 598 residues: MTVVVPEEGLDLESQPDDRMRAKALATSAAELPDGYYRSPRIVASFAAFSMNVVATYFVLQASASALPNILQDVGQSENSSLFSTLWTTGQAVSILMMGRLTDRFGRRPFVILTHILGLVGAIVGCTATKFNTLLAAMTMLGVAAGPAGASPLFIGELMSNKTKFLGLLIVSAPVVATNGLSPYLGQRLAIQGSWRWIFYIYIIMSTIAVTLIIIWYYPPSFAQLHGKKVSKREELAKVDWIGIILVIAGTSLFLLGVSWGGQPNNPWNSAKVIGLISSGAGTLVIFALYEVYGKPERPMVPPSLFKDTRGFVCILIISSIMGSMHLSLVIMYPQQVVNIFGSSLKNWEETAWMSATASFGTGAGVVVLGSLFHLVRHIRWQILVGAMWLTAFLGAMSSINRDNKNSAIALSVMTGFVVAWAQDITMLLVQFITTDENLGVAFAVVAAARPFAGSIFTAAFISVYTNRYPRELATHLSSALRGTGFPQGSFSSLLEAAKSGRMEAVNALPGMTTEISSVVSQAMADSYTASYANVYYFAMALGVIPIIASLCMRDLDCYLTDHVPHQLYDRKNAHKDVLEGNSESQPSPIILSMADKE.

A helical membrane pass occupies residues 42–62 (IVASFAAFSMNVVATYFVLQA). The N-linked (GlcNAc...) asparagine glycan is linked to N79. Transmembrane regions (helical) follow at residues 109–129 (PFVI…CTAT) and 135–155 (LAAM…PLFI). The N-linked (GlcNAc...) asparagine glycan is linked to N161. 10 helical membrane-spanning segments follow: residues 165–185 (FLGL…SPYL), 197–217 (WIFY…IIWY), 241–261 (WIGI…VSWG), 273–293 (VIGL…YEVY), 312–332 (FVCI…LVIM), 356–376 (ATAS…FHLV), 381–401 (WQIL…SSIN), 409–429 (IALS…TMLL), 442–462 (AFAV…AAFI), and 533–553 (ANVY…SLCM). A disordered region spans residues 579–598 (LEGNSESQPSPIILSMADKE).

It belongs to the major facilitator superfamily.

It is found in the cell membrane. Its function is as follows. Efflux pump that provides the dual role of trichothecene export and self-protection by allowing the fungus to evade the harmful effect of its own trichothecene production. The sequence is that of Trichothecene efflux pump TRI12 from Fusarium sporotrichioides.